The chain runs to 45 residues: Mu-conotoxin-like Cal 12.1.1d (45 aa).

4 disulfides stabilise this stretch: cysteine 3-cysteine 16, cysteine 11-cysteine 28, cysteine 18-cysteine 33, and cysteine 27-cysteine 39. A 6'-bromotryptophan modification is found at tryptophan 17. Glutamate 21 bears the 4-carboxyglutamate mark. A 4-hydroxyproline modification is found at proline 23. Residues tryptophan 37 and tryptophan 38 each carry the 6'-bromotryptophan modification. Position 40 is a 4-hydroxyproline (proline 40). 6'-bromotryptophan is present on tryptophan 44.

In terms of tissue distribution, expressed by the venom duct.

The protein resides in the secreted. Functionally, mu-conotoxins block voltage-gated sodium channels. This toxin reversibly blocks voltage-gated sodium channel in cephalopods, with no alteration in the voltage dependence of sodium conductance or on the kinetics of inactivation. This chain is Mu-conotoxin-like Cal 12.1.1d, found in Californiconus californicus (California cone).